The following is a 134-amino-acid chain: Small ribosomal subunit protein uS8c (134 aa).

This sequence belongs to the universal ribosomal protein uS8 family. In terms of assembly, part of the 30S ribosomal subunit.

It localises to the plastid. The protein localises to the chloroplast. Its function is as follows. One of the primary rRNA binding proteins, it binds directly to 16S rRNA central domain where it helps coordinate assembly of the platform of the 30S subunit. The sequence is that of Small ribosomal subunit protein uS8c (rps8) from Phaseolus angularis (Azuki bean).